The following is a 484-amino-acid chain: tRNA-2-methylthio-N(6)-dimethylallyladenosine synthase (484 aa).

The 118-residue stretch at 36-153 (GKLYIKTHGC…LPELIRARRE (118 aa)) folds into the MTTase N-terminal domain. The [4Fe-4S] cluster site is built by Cys-45, Cys-82, Cys-116, Cys-190, Cys-194, and Cys-197. Residues 176-415 (RAEGPSAFVS…HINAHAASIS (240 aa)) enclose the Radical SAM core domain. One can recognise a TRAM domain in the interval 416–479 (QSMVGSVQRV…SNSLRGRIQL (64 aa)). The disordered stretch occupies residues 428-450 (EGPSRRDPNELTGKSENMRPVNF).

It belongs to the methylthiotransferase family. MiaB subfamily. In terms of assembly, monomer. [4Fe-4S] cluster is required as a cofactor.

It is found in the cytoplasm. It catalyses the reaction N(6)-dimethylallyladenosine(37) in tRNA + (sulfur carrier)-SH + AH2 + 2 S-adenosyl-L-methionine = 2-methylsulfanyl-N(6)-dimethylallyladenosine(37) in tRNA + (sulfur carrier)-H + 5'-deoxyadenosine + L-methionine + A + S-adenosyl-L-homocysteine + 2 H(+). Functionally, catalyzes the methylthiolation of N6-(dimethylallyl)adenosine (i(6)A), leading to the formation of 2-methylthio-N6-(dimethylallyl)adenosine (ms(2)i(6)A) at position 37 in tRNAs that read codons beginning with uridine. In Xanthomonas euvesicatoria pv. vesicatoria (strain 85-10) (Xanthomonas campestris pv. vesicatoria), this protein is tRNA-2-methylthio-N(6)-dimethylallyladenosine synthase.